Reading from the N-terminus, the 304-residue chain is Recombination-associated protein RdgC (304 aa).

Belongs to the RdgC family.

The protein resides in the cytoplasm. The protein localises to the nucleoid. In terms of biological role, may be involved in recombination. In Shewanella baltica (strain OS223), this protein is Recombination-associated protein RdgC.